The following is a 2202-amino-acid chain: Activating signal cointegrator 1 complex subunit 3 (2202 aa).

Residues 1-400 form a required for interaction with ASCC2 region; sequence MALPRLTGAL…RQRDADVEKI (400 aa). S12 carries the phosphoserine modification. Coiled-coil stretches lie at residues 18 to 79 and 328 to 356; these read KQDN…AAKQ and IQSE…KAGE. Residues 486-669 form the Helicase ATP-binding 1 domain; the sequence is ETAYNTNENM…FLHVNPYIGL (184 aa). 499 to 506 is an ATP binding site; the sequence is APTGAGKT. An N6-acetyllysine modification is found at K572. The DEVH box signature appears at 611 to 614; that stretch reads DEVH. The Helicase C-terminal 1 domain maps to 728-914; that stretch reads TVRTAMSLIE…GTVTNVEEAV (187 aa). Positions 978–1287 constitute an SEC63 1 domain; sequence STDLGRTASH…GAEAVCIINF (310 aa). Residues 1336-1511 form the Helicase ATP-binding 2 domain; the sequence is HTLYHTDCNV…WLNIKQMGLF (176 aa). 1349-1356 is an ATP binding site; sequence APTGSGKT. Positions 1453 to 1456 match the DEIH box motif; that stretch reads DEIH. One can recognise a Helicase C-terminal 2 domain in the interval 1544–1739; it reads PAFQAIRSHS…VLSDHLNAEI (196 aa). In terms of domain architecture, SEC63 2 spans 1812-2176; it reads PLTYGRIASY…LGLDQQYDIY (365 aa). Residue S2195 is modified to Phosphoserine.

The protein belongs to the helicase family. As to quaternary structure, identified in the ASCC complex that contains ASCC1, ASCC2 and ASCC3. Functions as scaffolding subunit that interacts directly with both ASCC1 and ASCC2. Interacts directly with ALKBH3, and thereby recruits ALKBH3 to the ASCC complex. Part of the ASC-1/TRIP4 complex, that contains TRIP4, ASCC1, ASCC2 and ASCC3. Part of the RQT (ribosome quality control trigger) complex, that contains ASCC2, ASCC3 and TRIP4. Associates with ribosomes; recruited to collided ribosomes. Interacts with ZCCHC4. Interacts with ZNF598. Interacts with RPS3. Ubiquitous.

It is found in the nucleus. The protein localises to the nucleus speckle. The protein resides in the cytoplasm. It localises to the cytosol. The enzyme catalyses Couples ATP hydrolysis with the unwinding of duplex DNA by translocating in the 3'-5' direction.. The catalysed reaction is ATP + H2O = ADP + phosphate + H(+). In terms of biological role, ATPase involved both in DNA repair and rescue of stalled ribosomes. 3'-5' DNA helicase involved in repair of alkylated DNA: promotes DNA unwinding to generate single-stranded substrate needed for ALKBH3, enabling ALKBH3 to process alkylated N3-methylcytosine (3mC) within double-stranded regions. Also involved in activation of the ribosome quality control (RQC) pathway, a pathway that degrades nascent peptide chains during problematic translation. Drives the splitting of stalled ribosomes that are ubiquitinated in a ZNF598-dependent manner, as part of the ribosome quality control trigger (RQT) complex. Part of the ASC-1 complex that enhances NF-kappa-B, SRF and AP1 transactivation. In Homo sapiens (Human), this protein is Activating signal cointegrator 1 complex subunit 3 (ASCC3).